A 248-amino-acid chain; its full sequence is Aliphatic sulfonates import ATP-binding protein SsuB 2 (248 aa).

The 217-residue stretch at valine 14–isoleucine 230 folds into the ABC transporter domain. Glycine 46–serine 53 serves as a coordination point for ATP.

Belongs to the ABC transporter superfamily. Aliphatic sulfonates importer (TC 3.A.1.17.2) family. The complex is composed of two ATP-binding proteins (SsuB), two transmembrane proteins (SsuC) and a solute-binding protein (SsuA).

It is found in the cell inner membrane. The enzyme catalyses ATP + H2O + aliphatic sulfonate-[sulfonate-binding protein]Side 1 = ADP + phosphate + aliphatic sulfonateSide 2 + [sulfonate-binding protein]Side 1.. Part of the ABC transporter complex SsuABC involved in aliphatic sulfonates import. Responsible for energy coupling to the transport system. The polypeptide is Aliphatic sulfonates import ATP-binding protein SsuB 2 (Mesorhizobium japonicum (strain LMG 29417 / CECT 9101 / MAFF 303099) (Mesorhizobium loti (strain MAFF 303099))).